The chain runs to 456 residues: Bifunctional protein GlmU (456 aa).

The interval Met1 to Arg229 is pyrophosphorylase. Residues Leu11–Gly14, Lys25, Gln76, Gly81–Thr82, Tyr103–Asp105, Gly140, Glu154, Asn169, and Asn227 contribute to the UDP-N-acetyl-alpha-D-glucosamine site. Position 105 (Asp105) interacts with Mg(2+). Asn227 serves as a coordination point for Mg(2+). The linker stretch occupies residues Leu230–Ser250. The tract at residues Gly251–Lys456 is N-acetyltransferase. Residues Arg333 and Lys351 each coordinate UDP-N-acetyl-alpha-D-glucosamine. His363 (proton acceptor) is an active-site residue. Positions 366 and 377 each coordinate UDP-N-acetyl-alpha-D-glucosamine. Acetyl-CoA contacts are provided by residues Ala380, Asn386–Tyr387, Ser405, Ala423, and Arg440.

This sequence in the N-terminal section; belongs to the N-acetylglucosamine-1-phosphate uridyltransferase family. It in the C-terminal section; belongs to the transferase hexapeptide repeat family. As to quaternary structure, homotrimer. Mg(2+) is required as a cofactor.

The protein localises to the cytoplasm. The enzyme catalyses alpha-D-glucosamine 1-phosphate + acetyl-CoA = N-acetyl-alpha-D-glucosamine 1-phosphate + CoA + H(+). It carries out the reaction N-acetyl-alpha-D-glucosamine 1-phosphate + UTP + H(+) = UDP-N-acetyl-alpha-D-glucosamine + diphosphate. It participates in nucleotide-sugar biosynthesis; UDP-N-acetyl-alpha-D-glucosamine biosynthesis; N-acetyl-alpha-D-glucosamine 1-phosphate from alpha-D-glucosamine 6-phosphate (route II): step 2/2. The protein operates within nucleotide-sugar biosynthesis; UDP-N-acetyl-alpha-D-glucosamine biosynthesis; UDP-N-acetyl-alpha-D-glucosamine from N-acetyl-alpha-D-glucosamine 1-phosphate: step 1/1. Its pathway is bacterial outer membrane biogenesis; LPS lipid A biosynthesis. Catalyzes the last two sequential reactions in the de novo biosynthetic pathway for UDP-N-acetylglucosamine (UDP-GlcNAc). The C-terminal domain catalyzes the transfer of acetyl group from acetyl coenzyme A to glucosamine-1-phosphate (GlcN-1-P) to produce N-acetylglucosamine-1-phosphate (GlcNAc-1-P), which is converted into UDP-GlcNAc by the transfer of uridine 5-monophosphate (from uridine 5-triphosphate), a reaction catalyzed by the N-terminal domain. This Salmonella typhi protein is Bifunctional protein GlmU.